Consider the following 231-residue polypeptide: 5'-methylthioadenosine/S-adenosylhomocysteine nucleosidase (231 aa).

Catalysis depends on Glu12, which acts as the Proton acceptor. Residues Gly78, Val153, and 174–175 (ME) each bind substrate. Asp198 serves as the catalytic Proton donor.

It belongs to the PNP/UDP phosphorylase family. MtnN subfamily.

The enzyme catalyses S-adenosyl-L-homocysteine + H2O = S-(5-deoxy-D-ribos-5-yl)-L-homocysteine + adenine. It carries out the reaction S-methyl-5'-thioadenosine + H2O = 5-(methylsulfanyl)-D-ribose + adenine. It catalyses the reaction 5'-deoxyadenosine + H2O = 5-deoxy-D-ribose + adenine. The protein operates within amino-acid biosynthesis; L-methionine biosynthesis via salvage pathway; S-methyl-5-thio-alpha-D-ribose 1-phosphate from S-methyl-5'-thioadenosine (hydrolase route): step 1/2. Functionally, catalyzes the irreversible cleavage of the glycosidic bond in both 5'-methylthioadenosine (MTA) and S-adenosylhomocysteine (SAH/AdoHcy) to adenine and the corresponding thioribose, 5'-methylthioribose and S-ribosylhomocysteine, respectively. Also cleaves 5'-deoxyadenosine, a toxic by-product of radical S-adenosylmethionine (SAM) enzymes, into 5-deoxyribose and adenine. This is 5'-methylthioadenosine/S-adenosylhomocysteine nucleosidase from Vibrio vulnificus (strain YJ016).